The following is a 129-amino-acid chain: Large ribosomal subunit protein uL22 (129 aa).

The protein belongs to the universal ribosomal protein uL22 family. Part of the 50S ribosomal subunit.

Functionally, this protein binds specifically to 23S rRNA; its binding is stimulated by other ribosomal proteins, e.g. L4, L17, and L20. It is important during the early stages of 50S assembly. It makes multiple contacts with different domains of the 23S rRNA in the assembled 50S subunit and ribosome. Its function is as follows. The globular domain of the protein is located near the polypeptide exit tunnel on the outside of the subunit, while an extended beta-hairpin is found that lines the wall of the exit tunnel in the center of the 70S ribosome. This Phytoplasma sp. (strain STRAWB2) protein is Large ribosomal subunit protein uL22.